A 589-amino-acid polypeptide reads, in one-letter code: Sulfite reductase [NADPH] hemoprotein beta-component (589 aa).

[4Fe-4S] cluster contacts are provided by Cys443, Cys449, Cys488, and Cys492. A siroheme-binding site is contributed by Cys492.

It belongs to the nitrite and sulfite reductase 4Fe-4S domain family. In terms of assembly, alpha(8)-beta(8). The alpha component is a flavoprotein, the beta component is a hemoprotein. Siroheme is required as a cofactor. Requires [4Fe-4S] cluster as cofactor.

It carries out the reaction hydrogen sulfide + 3 NADP(+) + 3 H2O = sulfite + 3 NADPH + 4 H(+). Its pathway is sulfur metabolism; hydrogen sulfide biosynthesis; hydrogen sulfide from sulfite (NADPH route): step 1/1. Its function is as follows. Component of the sulfite reductase complex that catalyzes the 6-electron reduction of sulfite to sulfide. This is one of several activities required for the biosynthesis of L-cysteine from sulfate. This is Sulfite reductase [NADPH] hemoprotein beta-component from Neisseria meningitidis serogroup C / serotype 2a (strain ATCC 700532 / DSM 15464 / FAM18).